Reading from the N-terminus, the 126-residue chain is Fatty acid-binding protein, liver (126 aa).

A2 is subject to N-acetylalanine.

It belongs to the calycin superfamily. Fatty-acid binding protein (FABP) family. As to expression, liver.

Its subcellular location is the cytoplasm. Binds free fatty acids and their coenzyme A derivatives, bilirubin, and some other small molecules in the cytoplasm. May be involved in intracellular lipid transport this L-FABP binds only one fatty acid/molecule. Has more affinity for trans-parinaric acid than for cis-parinaric acid. The chain is Fatty acid-binding protein, liver (fabp1) from Rhamdia sapo (South American catfish).